The chain runs to 150 residues: UPF0098 protein TC_0109 (150 aa).

Belongs to the UPF0098 family.

This is UPF0098 protein TC_0109 from Chlamydia muridarum (strain MoPn / Nigg).